The following is a 96-amino-acid chain: Small ribosomal subunit protein bS18c (96 aa).

Belongs to the bacterial ribosomal protein bS18 family. In terms of assembly, part of the 30S ribosomal subunit.

It localises to the plastid. It is found in the chloroplast. This chain is Small ribosomal subunit protein bS18c (rps18), found in Pinus thunbergii (Japanese black pine).